We begin with the raw amino-acid sequence, 227 residues long: Ribose-5-phosphate isomerase A (227 aa).

Residues 28–31, 84–87, and 97–100 contribute to the substrate site; these read TGST, DGAD, and KGGG. Glutamate 106 serves as the catalytic Proton acceptor. Lysine 124 is a substrate binding site.

Belongs to the ribose 5-phosphate isomerase family. As to quaternary structure, homodimer.

The enzyme catalyses aldehydo-D-ribose 5-phosphate = D-ribulose 5-phosphate. Its pathway is carbohydrate degradation; pentose phosphate pathway; D-ribose 5-phosphate from D-ribulose 5-phosphate (non-oxidative stage): step 1/1. In terms of biological role, catalyzes the reversible conversion of ribose-5-phosphate to ribulose 5-phosphate. This Lactiplantibacillus plantarum (strain ATCC BAA-793 / NCIMB 8826 / WCFS1) (Lactobacillus plantarum) protein is Ribose-5-phosphate isomerase A.